The sequence spans 291 residues: Release factor glutamine methyltransferase (291 aa).

S-adenosyl-L-methionine-binding positions include 127 to 131 (GTGSG), Asp-150, Trp-179, and Asn-196. 196-199 (NPPY) contributes to the substrate binding site.

It belongs to the protein N5-glutamine methyltransferase family. PrmC subfamily.

It carries out the reaction L-glutaminyl-[peptide chain release factor] + S-adenosyl-L-methionine = N(5)-methyl-L-glutaminyl-[peptide chain release factor] + S-adenosyl-L-homocysteine + H(+). In terms of biological role, methylates the class 1 translation termination release factors RF1/PrfA and RF2/PrfB on the glutamine residue of the universally conserved GGQ motif. The chain is Release factor glutamine methyltransferase from Thermosynechococcus vestitus (strain NIES-2133 / IAM M-273 / BP-1).